Reading from the N-terminus, the 365-residue chain is MSHNTFGHLFRVTTWGESHGPALGCVVDGCPPGLRFTLADIQTWLDKRKPGQSRFVTQRREDDLVKVLSGVMLDDDGETMISTGTPISMLIENTDQRSKDYSEIAKRYRPGHADYTYDVKYGIRDYRGGGRSSARETAARVAAGAIARQVVPGLVVRGALVQIGKHRIDRANWDWAEVGKNPFFSPDPAVVPVWEEYLDGIRKAGSSIGAIVEVIAEGVPAGIGAPIYGKLDQDIAANLMSINAVKGVEIGNGFAAAEISGEDNADEMRVGAGGDAVFLSNNAGGILGGISTGQPVVARFAIKPTSSILSERRSIDSDGKEVDVRTKGRHDPCVGIRAVPIGEAMLACAIADHYLRDRGQTGRLK.

NADP(+)-binding residues include arginine 48 and arginine 54. FMN is bound by residues 131–133 (RSS), 243–244 (NA), glycine 288, 303–307 (KPTSS), and arginine 329.

The protein belongs to the chorismate synthase family. In terms of assembly, homotetramer. Requires FMNH2 as cofactor.

It catalyses the reaction 5-O-(1-carboxyvinyl)-3-phosphoshikimate = chorismate + phosphate. It functions in the pathway metabolic intermediate biosynthesis; chorismate biosynthesis; chorismate from D-erythrose 4-phosphate and phosphoenolpyruvate: step 7/7. Functionally, catalyzes the anti-1,4-elimination of the C-3 phosphate and the C-6 proR hydrogen from 5-enolpyruvylshikimate-3-phosphate (EPSP) to yield chorismate, which is the branch point compound that serves as the starting substrate for the three terminal pathways of aromatic amino acid biosynthesis. This reaction introduces a second double bond into the aromatic ring system. This Sinorhizobium medicae (strain WSM419) (Ensifer medicae) protein is Chorismate synthase.